The primary structure comprises 423 residues: Histidine--tRNA ligase (423 aa).

It belongs to the class-II aminoacyl-tRNA synthetase family. Homodimer.

The protein localises to the cytoplasm. The catalysed reaction is tRNA(His) + L-histidine + ATP = L-histidyl-tRNA(His) + AMP + diphosphate + H(+). The sequence is that of Histidine--tRNA ligase from Rhodococcus jostii (strain RHA1).